Consider the following 234-residue polypeptide: N-acetyl-alpha-D-glucosaminyl L-malate deacetylase 1 (234 aa).

Zn(2+) is bound by residues His-12, Asp-15, and His-113.

This sequence belongs to the PIGL family. It depends on Zn(2+) as a cofactor.

It carries out the reaction (S)-malyl N-acetyl-alpha-D-glucosaminide + H2O = (S)-malyl alpha-D-glucosaminide + acetate. Inhibited by BSH. Its function is as follows. Involved in bacillithiol (BSH) biosynthesis. Catalyzes the second step of the pathway, the deacetylation of N-acetylglucosaminylmalate (GlcNAc-Mal) to glucosamine malate (GlcN-Mal). The chain is N-acetyl-alpha-D-glucosaminyl L-malate deacetylase 1 from Bacillus anthracis.